Here is a 393-residue protein sequence, read N- to C-terminus: 1-deoxy-D-xylulose 5-phosphate reductoisomerase (393 aa).

Residues Thr-10, Gly-11, Ser-12, Ile-13, Arg-37, Gln-38, and Asn-124 each coordinate NADPH. Position 125 (Lys-125) interacts with 1-deoxy-D-xylulose 5-phosphate. NADPH is bound at residue Glu-126. Asp-150 lines the Mn(2+) pocket. 1-deoxy-D-xylulose 5-phosphate-binding residues include Ser-151, Glu-152, Ser-179, and His-202. Glu-152 serves as a coordination point for Mn(2+). Gly-208 is a binding site for NADPH. 1-deoxy-D-xylulose 5-phosphate contacts are provided by Ser-215, Asn-220, Lys-221, and Glu-224. Residue Glu-224 coordinates Mn(2+).

This sequence belongs to the DXR family. Mg(2+) serves as cofactor. Mn(2+) is required as a cofactor.

It carries out the reaction 2-C-methyl-D-erythritol 4-phosphate + NADP(+) = 1-deoxy-D-xylulose 5-phosphate + NADPH + H(+). It functions in the pathway isoprenoid biosynthesis; isopentenyl diphosphate biosynthesis via DXP pathway; isopentenyl diphosphate from 1-deoxy-D-xylulose 5-phosphate: step 1/6. Functionally, catalyzes the NADPH-dependent rearrangement and reduction of 1-deoxy-D-xylulose-5-phosphate (DXP) to 2-C-methyl-D-erythritol 4-phosphate (MEP). This chain is 1-deoxy-D-xylulose 5-phosphate reductoisomerase, found in Cupriavidus necator (strain ATCC 17699 / DSM 428 / KCTC 22496 / NCIMB 10442 / H16 / Stanier 337) (Ralstonia eutropha).